The primary structure comprises 55 residues: Small ribosomal subunit protein eS31 (55 aa).

The Zn(2+) site is built by cysteine 27, cysteine 30, cysteine 45, and cysteine 48. A C4-type zinc finger spans residues cysteine 27 to cysteine 48.

Belongs to the eukaryotic ribosomal protein eS31 family. As to quaternary structure, part of the 30S ribosomal subunit. Zn(2+) is required as a cofactor.

This is Small ribosomal subunit protein eS31 from Cenarchaeum symbiosum (strain A).